Consider the following 109-residue polypeptide: ATPase inhibitor mai-2, mitochondrial (109 aa).

Disordered regions lie at residues 18–39 (FSAG…SIRD) and 73–109 (EEVK…LGKE). The segment covering 21-35 (GGHGDGAGRGGGSGG) has biased composition (gly residues). The stretch at 55–109 (YFYKKQKAQLQELREHIQEEVKHHEGQLENHKKVLERHQQRISEIEAQERALGKE) forms a coiled coil.

This sequence belongs to the ATPase inhibitor family.

It is found in the mitochondrion. Its function is as follows. Thought to be a regulatory component of the ATP-synthesizing complex in the mitochondria. Activity is pH dependent. The sequence is that of ATPase inhibitor mai-2, mitochondrial (mai-2) from Caenorhabditis elegans.